Here is a 78-residue protein sequence, read N- to C-terminus: Small ribosomal subunit protein bS18 (78 aa).

The protein belongs to the bacterial ribosomal protein bS18 family. Part of the 30S ribosomal subunit. Forms a tight heterodimer with protein bS6.

Its function is as follows. Binds as a heterodimer with protein bS6 to the central domain of the 16S rRNA, where it helps stabilize the platform of the 30S subunit. In Parafrankia sp. (strain EAN1pec), this protein is Small ribosomal subunit protein bS18.